The sequence spans 456 residues: MDKLNKITVPASQKLRQLQKMVHDIKNNEGGIMNKIKKLKVKAPPSVPRRDYASESPADEEEQWSDDFDSDYENPDEHSDSEMYVMPAEENADDSYEPPPVEQETRPVHPALPFARGEYIDNRSSQRHSPPFSKTLPSKPSWPSEKARLTSTLPALTALQKPQVPPKPKGLLEDEADYVVPVEDNDENYIHPTESSSPPPEKAPMVNRSTKPNSSTPASPPGTASGRNSGAWETKSPPPAAPSPLPRAGKKPTTPLKTTPVASQQNASSVCEEKPIPAERHRGSSHRQEAVQSPVFPPAQKQIHQKPIPLPRFTEGGNPTVDGPLPSFSSNSTISEQEAGVLCKPWYAGACDRKSAEEALHRSNKDGSFLIRKSSGHDSKQPYTLVVFFNKRVYNIPVRFIEATKQYALGRKKNGEEYFGSVAEIIRNHQHSPLVLIDSQNNTKDSTRLKYAVKVS.

Residues Ile-36–Lys-301 form a disordered region. Over residues Pro-57–Asn-74 the composition is skewed to acidic residues. Tyr-72, Tyr-84, Tyr-96, Tyr-178, and Tyr-189 each carry phosphotyrosine; by SYK. Residues Glu-173 to Glu-187 show a composition bias toward acidic residues. Residues Pro-212–Gly-226 show a composition bias toward low complexity. The span at Ser-236–Leu-245 shows a compositional bias: pro residues. The segment covering Lys-251–Pro-260 has biased composition (low complexity). Basic and acidic residues predominate over residues Cys-271 to Glu-289. One can recognise an SH2 domain in the interval Trp-346–Val-453.

In terms of assembly, associates with PLCG1, VAV1 and NCK1 in a B-cell antigen receptor-dependent fashion. Interacts with VAV3, PLCG2 and GRB2. Interacts through its SH2 domain with CD79A. Interacts (via SH2 domain) with SYK; phosphorylated and activated by SYK. Interacts (via SH2 domain) with SCIMP; this interaction is dependent on phosphorylation of SCIMP 'Tyr-131'. Post-translationally, following BCR activation, phosphorylated on tyrosine residues by SYK and LYN. When phosphorylated, serves as a scaffold to assemble downstream targets of antigen activation, including PLCG1, VAV1, GRB2 and NCK1. Phosphorylation of Tyr-84, Tyr-178 and Tyr-189 facilitates PLCG1 binding. Phosphorylation of Tyr-96 facilitates BTK binding. Phosphorylation of Tyr-72 facilitates VAV1 and NCK1 binding. Phosphorylation is required for both Ca(2+) and MAPK signaling pathways. As to expression, expressed in B-cell lineage and fibroblast cell lines (at protein level). Highest levels of expression in the spleen, with lower levels in the liver, kidney, pancreas, small intestines and colon.

The protein resides in the cytoplasm. The protein localises to the cell membrane. Its function is as follows. Functions as a central linker protein, downstream of the B-cell receptor (BCR), bridging the SYK kinase to a multitude of signaling pathways and regulating biological outcomes of B-cell function and development. Plays a role in the activation of ERK/EPHB2, MAP kinase p38 and JNK. Modulates AP1 activation. Important for the activation of NF-kappa-B and NFAT. Plays an important role in BCR-mediated PLCG1 and PLCG2 activation and Ca(2+) mobilization and is required for trafficking of the BCR to late endosomes. However, does not seem to be required for pre-BCR-mediated activation of MAP kinase and phosphatidyl-inositol 3 (PI3) kinase signaling. May be required for the RAC1-JNK pathway. Plays a critical role in orchestrating the pro-B cell to pre-B cell transition. May play an important role in BCR-induced B-cell apoptosis. This is B-cell linker protein (BLNK) from Homo sapiens (Human).